Consider the following 195-residue polypeptide: Biogenesis of lysosome-related organelles complex 1 subunit 3 (195 aa).

Residues 1-11 (MESSQGRRRRP) are compositionally biased toward basic residues. Residues 1 to 72 (MESSQGRRRR…PEPEPTVVPV (72 aa)) are disordered. The segment covering 25 to 51 (ELSASSSEEELYLGPSGPTRGRPTGLR) has biased composition (low complexity). Phosphothreonine is present on threonine 59. The residue at position 61 (serine 61) is a Phosphoserine.

It belongs to the BLOC1S3 family. As to quaternary structure, octamer composed of one copy each BLOC1S1, BLOC1S2, BLOC1S3, BLOC1S4, BLOC1S5, BLOC1S6, DTNBP1/BLOC1S7 and SNAPIN/BLOC1S8. Interacts directly with BLOC1S2. Component of the biogenesis of lysosome-related organelles complex 1 (BLOC-1) composed of BLOC1S1, BLOC1S2, BLOC1S3, BLOC1S4, BLOC1S5, BLOC1S6, DTNBP1/BLOC1S7 and SNAPIN/BLOC1S8. The BLOC-1 complex associates with the AP-3 protein complex and membrane protein cargos. Interacts with BLOC1S4, BLOC1S5 and BLOC1S6. In terms of processing, phosphorylated. In terms of tissue distribution, ubiquitously expressed.

Its subcellular location is the cytoplasm. Component of the BLOC-1 complex, a complex that is required for normal biogenesis of lysosome-related organelles (LRO), such as platelet dense granules and melanosomes. In concert with the AP-3 complex, the BLOC-1 complex is required to target membrane protein cargos into vesicles assembled at cell bodies for delivery into neurites and nerve terminals. The BLOC-1 complex, in association with SNARE proteins, is also proposed to be involved in neurite extension. Plays a role in intracellular vesicle trafficking. The protein is Biogenesis of lysosome-related organelles complex 1 subunit 3 (Bloc1s3) of Mus musculus (Mouse).